The following is a 1506-amino-acid chain: ABC transporter C family member 9 (1506 aa).

The next 11 helical transmembrane spans lie at 37–57 (MQVT…FGVV), 84–104 (ISLL…LLLF), 116–136 (VSVF…SVVV), 150–170 (MLRS…AHFI), 179–199 (FQDY…AVSI), 315–335 (AINA…PYLI), 350–370 (LNHG…ETVT), 427–447 (FIWY…AIYI), 452–472 (LGLG…CNYP), 541–561 (FILW…CMLM), and 567–587 (AGAV…IFGL). An ABC transmembrane type-1 1 domain is found at 314 to 596 (AAINAVFAVV…LPDLLSALVQ (283 aa)). The region spanning 630 to 853 (VEIENGAFSW…NIGFEVLVGA (224 aa)) is the ABC transporter 1 domain. Residue 665-672 (GAVGSGKS) participates in ATP binding. The next 5 helical transmembrane spans lie at 934-956 (LLVP…SNYW), 976-996 (ILLV…ARTI), 1048-1068 (MAVK…TIFV), 1167-1187 (LSHF…EGVI), and 1191-1211 (IAGL…TVIW). One can recognise an ABC transmembrane type-1 2 domain in the interval 936-1218 (VPFIILAQSC…VIWNICNAEN (283 aa)). In terms of domain architecture, ABC transporter 2 spans 1257–1489 (FRDLQVRYAE…EDSFFSKLIK (233 aa)). 1289 to 1296 (GRTGSGKS) contacts ATP.

Belongs to the ABC transporter superfamily. ABCC family. Conjugate transporter (TC 3.A.1.208) subfamily. As to expression, ubiquitous.

It localises to the membrane. It catalyses the reaction ATP + H2O + xenobioticSide 1 = ADP + phosphate + xenobioticSide 2.. Functionally, pump for glutathione S-conjugates. The protein is ABC transporter C family member 9 (ABCC9) of Arabidopsis thaliana (Mouse-ear cress).